Consider the following 591-residue polypeptide: Coiled-coil domain-containing protein 148 (591 aa).

3 coiled-coil regions span residues 166–195 (VKKQ…SIKI), 352–417 (MLAK…KKKK), and 466–498 (ERRL…KQVA).

The sequence is that of Coiled-coil domain-containing protein 148 (CCDC148) from Homo sapiens (Human).